A 219-amino-acid chain; its full sequence is Large ribosomal subunit protein uL3 (219 aa).

The segment at 140 to 163 (SASHGAHRNHRKPGSIGASSTPSR) is disordered.

Belongs to the universal ribosomal protein uL3 family. In terms of assembly, part of the 50S ribosomal subunit. Forms a cluster with proteins L14 and L19.

Its function is as follows. One of the primary rRNA binding proteins, it binds directly near the 3'-end of the 23S rRNA, where it nucleates assembly of the 50S subunit. The protein is Large ribosomal subunit protein uL3 of Leifsonia xyli subsp. xyli (strain CTCB07).